The primary structure comprises 195 residues: Large ribosomal subunit protein bL25 (195 aa).

It belongs to the bacterial ribosomal protein bL25 family. CTC subfamily. In terms of assembly, part of the 50S ribosomal subunit; part of the 5S rRNA/L5/L18/L25 subcomplex. Contacts the 5S rRNA. Binds to the 5S rRNA independently of L5 and L18.

Functionally, this is one of the proteins that binds to the 5S RNA in the ribosome where it forms part of the central protuberance. The chain is Large ribosomal subunit protein bL25 from Geobacter metallireducens (strain ATCC 53774 / DSM 7210 / GS-15).